A 1403-amino-acid chain; its full sequence is Baculoviral IAP repeat-containing protein 1f (1403 aa).

3 BIR repeats span residues 60–127 (EAKR…CEFL), 159–227 (EEAR…CEFL), and 278–345 (EELR…CVFL). Residues Cys-315, Cys-318, His-335, and Cys-342 each coordinate Zn(2+). Positions 464–759 (SVMCVEGEAG…EFLAAVRLTE (296 aa)) constitute an NACHT domain. 473–478 (GSGKTT) contributes to the ATP binding site.

In terms of assembly, component of the NLRC4 inflammasome, at least composed of NLRC4, caspase-1 (CASP1) and some NAIP protein. (Microbial infection) Interacts with S.typhimurium (Salmonella) flagellin.

Sensor component of the NLRC4 inflammasome that specifically recognizes and binds flagellin from pathogenic bacteria. Association of pathogenic bacteria proteins drives in turn drive assembly and activation of the NLRC4 inflammasome, promoting caspase-1 activation, cytokine production and macrophage pyroptosis. The NLRC4 inflammasome is activated as part of the innate immune response to a range of intracellular bacteria. The NLRC4 inflammasome senses Gram-negative bacteria such as L.pneumophila and P.aeruginosa, enteric pathogens S.typhimurium (Salmonella) and S.flexneri. May contribute to prevent motor-neuron apoptosis induced by a variety of signals. The protein is Baculoviral IAP repeat-containing protein 1f (Naip6) of Mus musculus (Mouse).